We begin with the raw amino-acid sequence, 411 residues long: MEAETSWTNYPYSYITYVPEAESYREQSDDEAKVETFSMDSLLPDDLLERILSFLPIASIFRAGTVCKRWNEIVSSRRFLCNFSNNSVSQRPWYFMFTTTDDPSGYAYDPIIRKWYSFDLPCIETSNWFVASSCGLVCFMDNDCRNKIYVSNPITKQWRTLIEPPGHKSTDYTAMSTSVNRANQAVNRANRSYSVSIVKSKQVPGNFFQWDLSIHLYSSETMTWTTLVNDVLSGWRGGNESVICNNVLYFMIYSTGGSDHRHGLIASNLSSIGSPSSGILMRSFIPMPCSLTCGRLMNLRERLVIVGGIGKHDRPEVIKGIGIWVLKGKEWVEMAKMPQRFFQGFGEFDEVFASSGTDDLVYIQSYGSPALLTFDMNLKYWRWSQKCPVTKKFPLQLFTGFCFEPRLEIAP.

One can recognise an F-box domain in the interval 37–83 (FSMDSLLPDDLLERILSFLPIASIFRAGTVCKRWNEIVSSRRFLCNF). Kelch repeat units follow at residues 81 to 135 (CNFS…SSCG), 137 to 178 (VCFM…MSTS), 196 to 246 (SIVK…ICNN), 251 to 299 (MIYS…LMNL), 302 to 350 (RLVI…EFDE), and 352 to 401 (FASS…FTGF).

As to quaternary structure, part of a SCF (ASK-cullin-F-box) protein ligase complex. Interacts with SKP1A/ASK1, SKP1B/ASK2, ASK3, ASK9, ASK11, ASK12, ASK13, ASK14, ASK16 and ASK18.

Its pathway is protein modification; protein ubiquitination. In terms of biological role, component of SCF(ASK-cullin-F-box) E3 ubiquitin ligase complexes, which may mediate the ubiquitination and subsequent proteasomal degradation of target proteins. This chain is F-box/kelch-repeat protein At3g61590, found in Arabidopsis thaliana (Mouse-ear cress).